A 473-amino-acid polypeptide reads, in one-letter code: Photosystem II CP43 reaction center protein (473 aa).

Positions 1–14 (MKTLYSLRRFYPVE) are excised as a propeptide. Position 15 is an N-acetylthreonine (Thr15). Position 15 is a phosphothreonine (Thr15). Helical transmembrane passes span 69–93 (LFEVAHFVPEKPMYEQGLILLPHLA), 134–155 (LLGPETLEESFPFFGYVWKDRN), 178–200 (KALYFGGVYDTWAPGGGDVRKIT), 255–275 (KPFAWARRALVWSGEAYLSYS), and 291–312 (WFNNTAYPSEFYGPTGPEASQA). Glu367 is a [CaMn4O5] cluster binding site. The helical transmembrane segment at 447–471 (RARAAAAGFEKGIDRDFEPVLSMTP) threads the bilayer.

It belongs to the PsbB/PsbC family. PsbC subfamily. As to quaternary structure, PSII is composed of 1 copy each of membrane proteins PsbA, PsbB, PsbC, PsbD, PsbE, PsbF, PsbH, PsbI, PsbJ, PsbK, PsbL, PsbM, PsbT, PsbX, PsbY, PsbZ, Psb30/Ycf12, at least 3 peripheral proteins of the oxygen-evolving complex and a large number of cofactors. It forms dimeric complexes. Binds multiple chlorophylls and provides some of the ligands for the Ca-4Mn-5O cluster of the oxygen-evolving complex. It may also provide a ligand for a Cl- that is required for oxygen evolution. PSII binds additional chlorophylls, carotenoids and specific lipids. serves as cofactor.

The protein localises to the plastid. Its subcellular location is the chloroplast thylakoid membrane. Its function is as follows. One of the components of the core complex of photosystem II (PSII). It binds chlorophyll and helps catalyze the primary light-induced photochemical processes of PSII. PSII is a light-driven water:plastoquinone oxidoreductase, using light energy to abstract electrons from H(2)O, generating O(2) and a proton gradient subsequently used for ATP formation. This Vitis vinifera (Grape) protein is Photosystem II CP43 reaction center protein.